Consider the following 99-residue polypeptide: Plastocyanin (99 aa).

The region spanning 1 to 99 is the Plastocyanin-like domain; it reads IEILLGGDDG…AGMVGKVTVN (99 aa). Cu cation contacts are provided by His37, Cys84, His87, and Met92.

This sequence belongs to the plastocyanin family. It depends on Cu(2+) as a cofactor.

It localises to the plastid. Its subcellular location is the chloroplast thylakoid membrane. Functionally, participates in electron transfer between P700 and the cytochrome b6-f complex in photosystem I. This Cucumis sativus (Cucumber) protein is Plastocyanin (PETE).